The sequence spans 1055 residues: Error-prone DNA polymerase (1055 aa).

It belongs to the DNA polymerase type-C family. DnaE2 subfamily.

The protein resides in the cytoplasm. The catalysed reaction is DNA(n) + a 2'-deoxyribonucleoside 5'-triphosphate = DNA(n+1) + diphosphate. Functionally, DNA polymerase involved in damage-induced mutagenesis and translesion synthesis (TLS). It is not the major replicative DNA polymerase. This Corynebacterium glutamicum (strain ATCC 13032 / DSM 20300 / JCM 1318 / BCRC 11384 / CCUG 27702 / LMG 3730 / NBRC 12168 / NCIMB 10025 / NRRL B-2784 / 534) protein is Error-prone DNA polymerase.